The primary structure comprises 345 residues: UPF0228 protein MA_2656 (345 aa).

This sequence belongs to the UPF0228 family.

In Methanosarcina acetivorans (strain ATCC 35395 / DSM 2834 / JCM 12185 / C2A), this protein is UPF0228 protein MA_2656.